A 539-amino-acid polypeptide reads, in one-letter code: Fusion glycoprotein F0 (539 aa).

An N-terminal signal peptide occupies residues 1–18 (MSWKVVIIFSLLITPQHG). 7 disulfides stabilise this stretch: Cys-28–Cys-407, Cys-60–Cys-182, Cys-283–Cys-311, Cys-292–Cys-301, Cys-326–Cys-335, Cys-350–Cys-361, and Cys-384–Cys-390. Asn-57 is a glycosylation site (N-linked (GlcNAc...) asparagine; by host). A fusion peptide region spans residues 103 to 127 (FVLGAIALGVATAAAVTAGVAIAKT). Residue Asn-172 is glycosylated (N-linked (GlcNAc...) asparagine; by host). A Cell attachment site motif is present at residues 329-331 (RGD). An N-linked (GlcNAc...) asparagine; by host glycan is attached at Asn-353. Residues 492 to 512 (IIVIILIAVLGSSMILVSIFI) traverse the membrane as a helical segment. Residues 520–539 (PTGAPPELSGVTNNGFIPHS) are disordered. The segment covering 529 to 539 (GVTNNGFIPHS) has biased composition (polar residues).

It belongs to the paramyxoviruses fusion glycoprotein family. As to quaternary structure, homotrimer. Heterodimer with fusion protein F2; disulfide-linked. As a heterodimer with F2, interacts with host heparan sulfate. As a heterodimer with F2, interacts with host integrin ITGAV/ITGB1. Part of a complex composed of F1, F2 and G glycoproteins. Homotrimer. Heterodimer with fusion protein F1; disulfide-linked. As a heterodimer with F1, interacts with host heparan sulfate. As a heterodimer with F2, interacts with host integrin ITGAV/ITGB1. Part of a complex composed of F1, F2 and G glycoproteins. Post-translationally, the F glycoprotein is synthesized as a F0 inactive precursor that is heavily N-glycosylated and processed.

The protein resides in the virion membrane. The protein localises to the host cell membrane. In terms of biological role, inactive precursor that is cleaved to give rise to the mature F1 and F2 fusion glycoproteins. Functionally, class I viral fusion protein. Under the current model, the protein has at least 3 conformational states: pre-fusion native state, pre-hairpin intermediate state, and post-fusion hairpin state. During viral and plasma cell membrane fusion, the coiled coil regions assume a trimer-of-hairpins structure, positioning the fusion peptide in close proximity to the C-terminal region of the ectodomain. The formation of this structure appears to drive apposition and subsequent fusion of viral and cellular membranes leading to delivery of the nucleocapsid into the cytoplasm. This fusion is pH independent and occurs at the plasma or endosomal membrane. The trimer of F1-F2 (F protein) also facilitates the attachment to host cell by binding to host heparan sulfate. Its function is as follows. Major determinant of the species specificity of RSV infection. The trimer of F1-F2 (F protein) also facilitates the attachment to host cell by binding to host heparan sulfate. The protein is Fusion glycoprotein F0 (F) of Human metapneumovirus (strain CAN97-83) (HMPV).